Consider the following 389-residue polypeptide: Sulfate adenylyltransferase (389 aa).

The protein belongs to the sulfate adenylyltransferase family.

The catalysed reaction is sulfate + ATP + H(+) = adenosine 5'-phosphosulfate + diphosphate. It functions in the pathway sulfur metabolism; hydrogen sulfide biosynthesis; sulfite from sulfate: step 1/3. The chain is Sulfate adenylyltransferase from Deinococcus geothermalis (strain DSM 11300 / CIP 105573 / AG-3a).